Here is a 344-residue protein sequence, read N- to C-terminus: Golgi-associated RAB2 interactor protein 1B (344 aa).

The segment at 271–293 (FRSSRKVETNKNSSGKDSSREDS) is disordered.

The protein belongs to the GARIN family.

The protein resides in the golgi apparatus. Functionally, RAB2B effector protein required for accurate acrosome formation and normal male fertility. In complex with RAB2A/RAB2B, seems to suppress excessive vesicle trafficking during acrosome formation. This is Golgi-associated RAB2 interactor protein 1B from Homo sapiens (Human).